The chain runs to 559 residues: Podocan-like protein 1 (559 aa).

The signal sequence occupies residues 1–20 (MRPQELLLLLLMLKWSLAHT). Asparagine 64 carries N-linked (GlcNAc...) asparagine glycosylation. LRR repeat units lie at residues 66–89 (TRAA…ELSR), 90–115 (LSGL…AFES), 117–139 (NQLE…LPRS), 140–160 (LRVA…TFGE), 161–186 (KPAL…TFHG), 188–208 (EVIT…PSLP), 209–231 (ASLE…ALSL), 233–257 (THLR…TFSK), 258–281 (LSSL…LPGT), 283–302 (TILH…RLHK), 303–328 (ARGL…TLRP), 329–352 (LRAL…LPRH), 354–373 (QALV…DLVS), 374–399 (ARAL…AFRR), 400–423 (LRAL…LPAS), 425–444 (RSLR…QLAG), 445–470 (LNKL…TWHE), 471–494 (LQAL…LPEA), 496–515 (EELY…AFLS), and 517–541 (PHLR…ALQG).

The protein belongs to the small leucine-rich proteoglycan (SLRP) family. SLRP class V subfamily. Post-translationally, N-glycosylated. Detected in bone where it is expressed in osteoblasts and newly formed bone matrix (at protein level). Also expressed weakly in osteoclasts (at protein level). Expressed strongly in calvaria, lung and femur, and weakly in kidney.

The protein resides in the secreted. It is found in the extracellular space. The protein localises to the extracellular matrix. The polypeptide is Podocan-like protein 1 (Mus musculus (Mouse)).